Consider the following 1008-residue polypeptide: Retinoblastoma-related protein (1008 aa).

The tract at residues 375-394 (KRKVDSMTSPTKTITSPLSP) is disordered. Polar residues predominate over residues 380 to 392 (SMTSPTKTITSPL). The domain A stretch occupies residues 404 to 605 (TPVSTAMTTA…EKGSSMYNSL (202 aa)). The segment at 404-853 (TPVSTAMTTA…NEVFIPSVKP (450 aa)) is pocket. The spacer stretch occupies residues 606 to 722 (TIARPNLSNE…HPTRGETCGE (117 aa)). Positions 723–853 (TAVNLFFSKI…NEVFIPSVKP (131 aa)) are domain B. Disordered stretches follow at residues 865-899 (KNPN…SLPD) and 988-1008 (LQNG…LKTE).

This sequence belongs to the retinoblastoma protein (RB) family.

It is found in the nucleus. Regulator of biological processes that recruits a histone deacetylase to control gene transcription. May play a role in the entry into mitosis, negatively regulating the cell proliferation. Formation of stable complexes with geminiviridae replication-associated proteins may create a cellular environment which favors viral DNA replication. The sequence is that of Retinoblastoma-related protein (RBR) from Pilosella officinarum (Mouse-ear hawkweed).